The following is a 335-amino-acid chain: Geranylgeranyl pyrophosphate synthase BTS1 (335 aa).

K36, R39, and H68 together coordinate isopentenyl diphosphate. D75 and D79 together coordinate Mg(2+). R84 contacts dimethylallyl diphosphate. Isopentenyl diphosphate is bound at residue R85. The dimethylallyl diphosphate site is built by K169, T170, Q206, N213, K223, and K233.

This sequence belongs to the FPP/GGPP synthase family. Requires Mg(2+) as cofactor.

It is found in the cytoplasm. The catalysed reaction is isopentenyl diphosphate + dimethylallyl diphosphate = (2E)-geranyl diphosphate + diphosphate. It carries out the reaction isopentenyl diphosphate + (2E)-geranyl diphosphate = (2E,6E)-farnesyl diphosphate + diphosphate. The enzyme catalyses isopentenyl diphosphate + (2E,6E)-farnesyl diphosphate = (2E,6E,10E)-geranylgeranyl diphosphate + diphosphate. Its pathway is isoprenoid biosynthesis; farnesyl diphosphate biosynthesis; farnesyl diphosphate from geranyl diphosphate and isopentenyl diphosphate: step 1/1. It participates in isoprenoid biosynthesis; geranyl diphosphate biosynthesis; geranyl diphosphate from dimethylallyl diphosphate and isopentenyl diphosphate: step 1/1. It functions in the pathway isoprenoid biosynthesis; geranylgeranyl diphosphate biosynthesis; geranylgeranyl diphosphate from farnesyl diphosphate and isopentenyl diphosphate: step 1/1. Its function is as follows. Catalyzes the trans-addition of the 3 molecules of IPP onto DMAPP to form geranylgeranyl pyrophosphate. Required for the membrane attachment of YPT1 and SEC4. May be involved in vesicle trafficking and protein sorting. The chain is Geranylgeranyl pyrophosphate synthase BTS1 (BTS1) from Saccharomyces cerevisiae (strain ATCC 204508 / S288c) (Baker's yeast).